The following is a 53-amino-acid chain: Metallocarboxypeptidase inhibitor (53 aa).

3 disulfides stabilise this stretch: cysteine 9–cysteine 23, cysteine 15–cysteine 51, and cysteine 27–cysteine 38. Alanine 53 provides a ligand contact to Zn(2+).

Monomer. Interacts (via C-terminus) with human CPA4.

Its function is as follows. Metallocarboxypeptidase inhibitor. Has an inhibitory effect on bovine CPA1 and CPB2, human CPA1, CPA2, CPA4, CPB1 and CPB2, and porcine CPB1. Does not inhibit D.melanogaster svr (carboxypeptidase D). Shows no activity against serine proteases subtilisin or bovine trypsin, cysteine protease papain, and aspartyl protease porcine pepsin. This Nerita versicolor (Four-tooth nerite) protein is Metallocarboxypeptidase inhibitor.